Consider the following 271-residue polypeptide: Elongation factor Ts (271 aa).

The involved in Mg(2+) ion dislocation from EF-Tu stretch occupies residues 76–79 (TDFV).

Belongs to the EF-Ts family.

The protein resides in the cytoplasm. Functionally, associates with the EF-Tu.GDP complex and induces the exchange of GDP to GTP. It remains bound to the aminoacyl-tRNA.EF-Tu.GTP complex up to the GTP hydrolysis stage on the ribosome. In Mycobacterium bovis (strain BCG / Pasteur 1173P2), this protein is Elongation factor Ts.